The following is a 519-amino-acid chain: ATP synthase subunit alpha 2 (519 aa).

179-186 (GDRQTGKT) lines the ATP pocket.

Belongs to the ATPase alpha/beta chains family. F-type ATPases have 2 components, CF(1) - the catalytic core - and CF(0) - the membrane proton channel. CF(1) has five subunits: alpha(3), beta(3), gamma(1), delta(1), epsilon(1). CF(0) has three main subunits: a(1), b(2) and c(9-12). The alpha and beta chains form an alternating ring which encloses part of the gamma chain. CF(1) is attached to CF(0) by a central stalk formed by the gamma and epsilon chains, while a peripheral stalk is formed by the delta and b chains.

The protein localises to the cell inner membrane. The catalysed reaction is ATP + H2O + 4 H(+)(in) = ADP + phosphate + 5 H(+)(out). Functionally, produces ATP from ADP in the presence of a proton gradient across the membrane. The alpha chain is a regulatory subunit. This Syntrophus aciditrophicus (strain SB) protein is ATP synthase subunit alpha 2.